Reading from the N-terminus, the 439-residue chain is Cobyrinate a,c-diamide synthase (439 aa).

The interval 214-235 (ETARAPPEVATTERNTGDSPAD) is disordered. Positions 237–428 (RVAVAQDSAF…CHCHGESGAF (192 aa)) constitute a GATase cobBQ-type domain. Cys317 serves as the catalytic Nucleophile.

Belongs to the CobB/CbiA family. Requires Mg(2+) as cofactor.

It carries out the reaction cob(II)yrinate + 2 L-glutamine + 2 ATP + 2 H2O = cob(II)yrinate a,c diamide + 2 L-glutamate + 2 ADP + 2 phosphate + 2 H(+). Its pathway is cofactor biosynthesis; adenosylcobalamin biosynthesis; cob(II)yrinate a,c-diamide from sirohydrochlorin (anaerobic route): step 10/10. In terms of biological role, catalyzes the ATP-dependent amidation of the two carboxylate groups at positions a and c of cobyrinate, using either L-glutamine or ammonia as the nitrogen source. The polypeptide is Cobyrinate a,c-diamide synthase (Haloarcula marismortui (strain ATCC 43049 / DSM 3752 / JCM 8966 / VKM B-1809) (Halobacterium marismortui)).